Here is a 491-residue protein sequence, read N- to C-terminus: Keratin, type I cytoskeletal 39 (491 aa).

Positions 1-96 (MDTKGCTTTN…WYGEGINSNE (96 aa)) are head. Positions 96–407 (EKETMQILNE…SLLESSDGKR (312 aa)) constitute an IF rod domain. The coil 1A stretch occupies residues 97–131 (KETMQILNERLANYLQKVRMLERENAELESKIQEE). The tract at residues 132–142 (SNKELPVLCPD) is linker 1. Positions 143–243 (YLSYYTTIEE…HKEEINSLQC (101 aa)) are coil 1B. The interval 244-259 (QLGERLDIEVTAAPSA) is linker 12. Residues 260–403 (DLNQVLQEMR…TTYRSLLESS (144 aa)) form a coil 2 region. Residues 404–491 (DGKRPCYPRA…PCFIIRPAKV (88 aa)) are tail.

This sequence belongs to the intermediate filament family. As to quaternary structure, heterotetramer of two type I and two type II keratins. As to expression, expressed in skin and scalp. In the hair follicle, it is present in the upper hair cuticle and the upper cortex. Also present in the in the upper portion of beard hairs (at protein level).

In terms of biological role, may play a role in late hair differentiation. The protein is Keratin, type I cytoskeletal 39 (KRT39) of Homo sapiens (Human).